Consider the following 51-residue polypeptide: Cytoplasmic FMR1-interacting protein 1 (51 aa).

It belongs to the CYFIP family. Component of the WAVE1 complex composed of ABI2, CYFIP1 or CYFIP2, BRK1, NCKAP1 and WASF1/WAVE1. Within the complex, a heterodimer containing NCKAP1 and CYFIP1 interacts with a heterotrimer formed by WAVE1, ABI2 and BRK1. Component of the CYFIP1-EIF4E-FMR1 complex which is composed of CYFIP, EIF4E and FMR1. Interacts with FMR1 but does not bind to related proteins FXR1 or FXR2. Interaction with EIF4E stimulates FMR1 binding. Component of the WAVE2 complex composed of ABI1, CYFIP1/SRA1, NCKAP1/NAP1 (NCKAP1l/HEM1 in hematopoietic cells) and WASF2/WAVE2. Interacts with the active GTP-bound form of RAC1. Interacts through its C-terminus with the C-terminus of DPYSL2/CRMP2 which is necessary for DPYSL2-induced axon outgrowth. Interacts with NYAP1, NYAP2 and MYO16. Interacts with TMEM108 (via N-terminus); the interaction associates TMEM108 with the WAVE1 complex.

Its subcellular location is the cytoplasm. The protein resides in the perinuclear region. The protein localises to the cell projection. It localises to the lamellipodium. It is found in the ruffle. Its subcellular location is the synapse. The protein resides in the synaptosome. Its function is as follows. Component of the CYFIP1-EIF4E-FMR1 complex which binds to the mRNA cap and mediates translational repression. In the CYFIP1-EIF4E-FMR1 complex this subunit is an adapter between EIF4E and FMR1. Promotes the translation repression activity of FMR1 in brain probably by mediating its association with EIF4E and mRNA. Regulates formation of membrane ruffles and lamellipodia. Plays a role in axon outgrowth. Binds to F-actin but not to RNA. Part of the WAVE complex that regulates actin filament reorganization via its interaction with the Arp2/3 complex. Actin remodeling activity is regulated by RAC1. Regulator of epithelial morphogenesis. As component of the WAVE1 complex, required for BDNF-NTRK2 endocytic trafficking and signaling from early endosomes. This is Cytoplasmic FMR1-interacting protein 1 from Bos taurus (Bovine).